Reading from the N-terminus, the 319-residue chain is Ribonuclease Z (319 aa).

Zn(2+) is bound by residues His62, His64, Asp66, His67, His145, Asp215, and His273. Catalysis depends on Asp66, which acts as the Proton acceptor.

The protein belongs to the RNase Z family. In terms of assembly, homodimer. The cofactor is Zn(2+).

The enzyme catalyses Endonucleolytic cleavage of RNA, removing extra 3' nucleotides from tRNA precursor, generating 3' termini of tRNAs. A 3'-hydroxy group is left at the tRNA terminus and a 5'-phosphoryl group is left at the trailer molecule.. Its function is as follows. Zinc phosphodiesterase, which displays some tRNA 3'-processing endonuclease activity. Probably involved in tRNA maturation, by removing a 3'-trailer from precursor tRNA. This Borreliella burgdorferi (strain ATCC 35210 / DSM 4680 / CIP 102532 / B31) (Borrelia burgdorferi) protein is Ribonuclease Z.